Reading from the N-terminus, the 363-residue chain is Trichocyst matrix protein T4-A (363 aa).

The signal sequence occupies residues 1–17 (MARSLTILAIVFAVATA). The propeptide occupies 18 to 52 (RVTKSESPKEILAQVNKDSFGNSILSVLQLQLATG). Positions 85–119 (VAFEKIIADLEQEIAYHQTQIVALSNLRDSTTEAL) form a coiled coil. Positions 190-221 (RFEKVQAKLMESKHALFKPLINALTQLASKVD) are excised as a propeptide. Positions 244 to 352 (ASLLATEERQ…EVLTQKLSAA (109 aa)) form a coiled coil.

It belongs to the TMP family. Two components are produced by post-translational processing from the precursor peptide.

It is found in the trichocyst. Functionally, structural protein that crystallize inside the trichocyst matrix. This Paramecium tetraurelia protein is Trichocyst matrix protein T4-A (T4A).